The primary structure comprises 326 residues: tRNA-modifying protein YgfZ (326 aa).

Folate contacts are provided by Trp-27 and Trp-189.

It belongs to the tRNA-modifying YgfZ family.

Its subcellular location is the cytoplasm. Folate-binding protein involved in regulating the level of ATP-DnaA and in the modification of some tRNAs. It is probably a key factor in regulatory networks that act via tRNA modification, such as initiation of chromosomal replication. This is tRNA-modifying protein YgfZ from Escherichia coli O7:K1 (strain IAI39 / ExPEC).